The sequence spans 94 residues: Acylphosphatase (94 aa).

The 90-residue stretch at 5 to 94 folds into the Acylphosphatase-like domain; sequence RLTAFVHGHV…PRDVEGFVER (90 aa). Active-site residues include R20 and N38.

It belongs to the acylphosphatase family.

It catalyses the reaction an acyl phosphate + H2O = a carboxylate + phosphate + H(+). In Corynebacterium glutamicum (strain R), this protein is Acylphosphatase (acyP).